The primary structure comprises 285 residues: Guanylate kinase 2, chloroplastic/mitochondrial (285 aa).

Low complexity predominate over residues 1-19 (MLLTRRFSSALARSPLLPR). Residues 1–42 (MLLTRRFSSALARSPLLPRSLPPPRAVPATPPAPRPPPRRLM) constitute a chloroplast and mitochondrion transit peptide. Residues 1–66 (MLLTRRFSSA…PPPPSGADKD (66 aa)) form a disordered region. Pro residues predominate over residues 20–36 (SLPPPRAVPATPPAPRP). Residues 40-50 (RLMSSSSSGWH) show a composition bias toward low complexity. The Guanylate kinase-like domain maps to 91-272 (PMILVISGPS…AVKQVESIID (182 aa)). 98–105 (GPSGVGKD) lines the ATP pocket. Active-site residues include Arg-130, Arg-224, and Arg-235. Position 255 (Asn-255) interacts with ATP.

This sequence belongs to the guanylate kinase family. Monomer.

The protein resides in the plastid. The protein localises to the chloroplast. It is found in the mitochondrion. The catalysed reaction is GMP + ATP = GDP + ADP. Essential for recycling GMP and indirectly, cGMP. Essential for chloroplast differentiation at early stage of leaf development. May not be involved in the synthesis and maintenance of the organellar DNA during leaf development. This Oryza sativa subsp. japonica (Rice) protein is Guanylate kinase 2, chloroplastic/mitochondrial (V2).